A 184-amino-acid polypeptide reads, in one-letter code: Photosystem I assembly protein Ycf4 (184 aa).

Transmembrane regions (helical) follow at residues 19–39 (ISNF…LLVG) and 57–77 (IIFF…LFIS).

Belongs to the Ycf4 family.

It localises to the plastid. The protein resides in the chloroplast thylakoid membrane. In terms of biological role, seems to be required for the assembly of the photosystem I complex. The chain is Photosystem I assembly protein Ycf4 from Nicotiana sylvestris (Wood tobacco).